We begin with the raw amino-acid sequence, 333 residues long: Glycerol-3-phosphate dehydrogenase [NAD(P)+] (333 aa).

Positions 19, 40, 41, and 113 each coordinate NADPH. Sn-glycerol 3-phosphate-binding residues include lysine 113 and glycine 141. Alanine 145 lines the NADPH pocket. 5 residues coordinate sn-glycerol 3-phosphate: lysine 196, aspartate 249, serine 259, arginine 260, and asparagine 261. Lysine 196 functions as the Proton acceptor in the catalytic mechanism. Arginine 260 is an NADPH binding site. The NADPH site is built by valine 282 and glutamate 283.

It belongs to the NAD-dependent glycerol-3-phosphate dehydrogenase family.

It is found in the cytoplasm. It carries out the reaction sn-glycerol 3-phosphate + NAD(+) = dihydroxyacetone phosphate + NADH + H(+). The enzyme catalyses sn-glycerol 3-phosphate + NADP(+) = dihydroxyacetone phosphate + NADPH + H(+). It participates in membrane lipid metabolism; glycerophospholipid metabolism. Catalyzes the reduction of the glycolytic intermediate dihydroxyacetone phosphate (DHAP) to sn-glycerol 3-phosphate (G3P), the key precursor for phospholipid synthesis. This Sinorhizobium fredii (strain NBRC 101917 / NGR234) protein is Glycerol-3-phosphate dehydrogenase [NAD(P)+].